Here is a 352-residue protein sequence, read N- to C-terminus: MTQISERLLVQAHLDAKQPNPLTAEQEAEYRAAIAAELKAQNAVLVAHYYCDPVIQALAEETGGCVSDSLEMARFGKNHPAETVIVAGVRFMGETAKILTPEKRVLMPTLEATCSLDLGCPVEEFSAFCDQHPERTVVVYANTSAAVKARADWVVTSSCALEIVESLMDNGETIIWGPDQHLGRYIQKQTGADMLLWDGACIVHEEFKSRQLADMKALYPDAAILVHPESPEAVIELADAVGSTSQLIKAAQTLPNKTFIVATDRGIFYKMQQLCPDKEFVEAPTAGNGAACRSCAHCPWMAMNTLERVLDCLRKGGDEIFVDPALVPKAIKPLNRMLDFTQAARLKLSGNA.

Positions 48 and 69 each coordinate iminosuccinate. A [4Fe-4S] cluster-binding site is contributed by C114. Iminosuccinate contacts are provided by residues 140-142 (YAN) and S157. C201 lines the [4Fe-4S] cluster pocket. Residues 227–229 (HPE) and T244 each bind iminosuccinate. [4Fe-4S] cluster is bound at residue C298.

This sequence belongs to the quinolinate synthase family. Type 1 subfamily. [4Fe-4S] cluster serves as cofactor.

The protein localises to the cytoplasm. The enzyme catalyses iminosuccinate + dihydroxyacetone phosphate = quinolinate + phosphate + 2 H2O + H(+). It participates in cofactor biosynthesis; NAD(+) biosynthesis; quinolinate from iminoaspartate: step 1/1. Its function is as follows. Catalyzes the condensation of iminoaspartate with dihydroxyacetone phosphate to form quinolinate. This is Quinolinate synthase from Pseudomonas putida (strain GB-1).